Consider the following 250-residue polypeptide: Tetrahydromethanopterin S-methyltransferase subunit D (250 aa).

6 helical membrane-spanning segments follow: residues 9-29, 47-67, 86-106, 144-164, 184-204, and 230-250; these read IIWM…VHFV, GTVQ…GFMM, IMIA…VGVV, IIGG…LIEV, LVAV…VIPS, and LVAS…LGGI.

Belongs to the MtrD family. As to quaternary structure, the complex is composed of 8 subunits; MtrA, MtrB, MtrC, MtrD, MtrE, MtrF, MtrG and MtrH.

The protein localises to the cell membrane. The enzyme catalyses 5-methyl-5,6,7,8-tetrahydromethanopterin + coenzyme M + 2 Na(+)(in) = 5,6,7,8-tetrahydromethanopterin + methyl-coenzyme M + 2 Na(+)(out). It functions in the pathway one-carbon metabolism; methanogenesis from CO(2); methyl-coenzyme M from 5,10-methylene-5,6,7,8-tetrahydromethanopterin: step 2/2. Its function is as follows. Part of a complex that catalyzes the formation of methyl-coenzyme M and tetrahydromethanopterin from coenzyme M and methyl-tetrahydromethanopterin. This is an energy-conserving, sodium-ion translocating step. The sequence is that of Tetrahydromethanopterin S-methyltransferase subunit D from Methanosarcina barkeri (strain Fusaro / DSM 804).